The primary structure comprises 98 residues: NADH-ubiquinone oxidoreductase chain 4L (98 aa).

The next 3 helical transmembrane spans lie at 1–21 (MSLTYMNMFMAFTISLLGLLL), 29–49 (SLLCLEGMMLSLFVMMTMTIL), and 61–81 (IILLVFAACEAALGLSLLVMV).

The protein belongs to the complex I subunit 4L family. As to quaternary structure, core subunit of respiratory chain NADH dehydrogenase (Complex I) which is composed of 45 different subunits.

Its subcellular location is the mitochondrion inner membrane. It catalyses the reaction a ubiquinone + NADH + 5 H(+)(in) = a ubiquinol + NAD(+) + 4 H(+)(out). Its function is as follows. Core subunit of the mitochondrial membrane respiratory chain NADH dehydrogenase (Complex I) which catalyzes electron transfer from NADH through the respiratory chain, using ubiquinone as an electron acceptor. Part of the enzyme membrane arm which is embedded in the lipid bilayer and involved in proton translocation. The sequence is that of NADH-ubiquinone oxidoreductase chain 4L (MT-ND4L) from Vampyrodes caraccioli (Great stripe-faced bat).